An 825-amino-acid chain; its full sequence is NT-3 growth factor receptor (825 aa).

Positions 1–31 are cleaved as a signal peptide; sequence MDVSLCPAKCSFWRIFLLGSVWLDYVGSVLA. 2 disulfides stabilise this stretch: C32/C38 and C36/C45. Topologically, residues 32–429 are extracellular; sequence CPANCVCSKT…TVTHKPEEDT (398 aa). 3 N-linked (GlcNAc...) asparagine glycosylation sites follow: N68, N72, and N79. 2 LRR repeats span residues 104 to 125 and 128 to 149; these read GLQK…AFAK and HLRY…LFQT. N-linked (GlcNAc...) asparagine glycans are attached at residues N133 and N163. The LRRCT domain occupies 160 to 209; sequence NFFNCSCDIRWMQLWQEQGEAKLNSQSLYCISADGSQLPLFRMNISQCDL. Intrachain disulfides connect C164/C189 and C166/C207. N203, N218, N232, N259, N267, N272, and N294 each carry an N-linked (GlcNAc...) asparagine glycan. 2 Ig-like C2-type domains span residues 210 to 300 and 309 to 382; these read PEIS…VALT and SLEE…NRQE. Residues C231 and C284 are joined by a disulfide bond. An intrachain disulfide couples C320 to C362. N375 and N388 each carry an N-linked (GlcNAc...) asparagine glycan. Residues 430-453 form a helical membrane-spanning segment; it reads FGVSIAVGLAAFACVLLVVLFIMI. Over 454-825 the chain is Cytoplasmic; that stretch reads NKYGRRSKFG…ATPIYLDILG (372 aa). Y516 carries the post-translational modification Phosphotyrosine; by autocatalysis. One can recognise a Protein kinase domain in the interval 538–814; sequence IVLKRELGEG…EIYKILHALG (277 aa). ATP-binding positions include 544-552 and K572; that span reads LGEGAFGKV. D679 (proton acceptor) is an active-site residue. Y705, Y709, Y710, and Y820 each carry phosphotyrosine; by autocatalysis.

The protein belongs to the protein kinase superfamily. Tyr protein kinase family. Insulin receptor subfamily. Exists in a dynamic equilibrium between monomeric (low affinity) and dimeric (high affinity) structures. Binds SH2B2. Interacts with SQSTM1 and KIDINS220. Interacts with PTPRS. Interacts with MAPK8IP3/JIP3. Ligand-mediated auto-phosphorylation. As to expression, preferentially in the brain, low levels in the ovaries.

It is found in the membrane. It carries out the reaction L-tyrosyl-[protein] + ATP = O-phospho-L-tyrosyl-[protein] + ADP + H(+). In terms of biological role, receptor tyrosine kinase involved in nervous system and probably heart development. Upon binding of its ligand NTF3/neurotrophin-3, NTRK3 autophosphorylates and activates different signaling pathways, including the phosphatidylinositol 3-kinase/AKT and the MAPK pathways, that control cell survival and differentiation. This Sus scrofa (Pig) protein is NT-3 growth factor receptor (NTRK3).